A 610-amino-acid polypeptide reads, in one-letter code: ESX-5 secretion system protein EccA5 (610 aa).

357–364 (GPPGTGKT) is a binding site for ATP.

It belongs to the CbxX/CfxQ family. Part of the ESX-5 / type VII secretion system (T7SS), which is composed of cytosolic and membrane components.

The protein localises to the cytoplasm. In terms of biological role, part of the ESX-5 specialized secretion system, which is responsible for the secretion of EsxN and a number of PE_PGRS and PPE proteins. EccA5 exhibits ATPase activity and may provide energy for the export of ESX-5 substrates. The protein is ESX-5 secretion system protein EccA5 of Mycobacterium marinum (strain ATCC BAA-535 / M).